Consider the following 365-residue polypeptide: Heme A synthase (365 aa).

A run of 5 helical transmembrane segments spans residues Leu23 to Gly43, Leu109 to Gly129, Leu137 to Val157, Leu172 to Gly192, and Gly208 to Ala228. His272 contacts heme. Transmembrane regions (helical) follow at residues Leu274 to Leu294, Ala303 to Met323, and Ile327 to His347. Heme is bound at residue His333.

The protein belongs to the COX15/CtaA family. Type 2 subfamily. As to quaternary structure, interacts with CtaB. Heme b serves as cofactor.

Its subcellular location is the cell membrane. It carries out the reaction Fe(II)-heme o + 2 A + H2O = Fe(II)-heme a + 2 AH2. It participates in porphyrin-containing compound metabolism; heme A biosynthesis; heme A from heme O: step 1/1. In terms of biological role, catalyzes the conversion of heme O to heme A by two successive hydroxylations of the methyl group at C8. The first hydroxylation forms heme I, the second hydroxylation results in an unstable dihydroxymethyl group, which spontaneously dehydrates, resulting in the formyl group of heme A. In Agrobacterium fabrum (strain C58 / ATCC 33970) (Agrobacterium tumefaciens (strain C58)), this protein is Heme A synthase.